The following is a 377-amino-acid chain: Probable tRNA pseudouridine synthase D (377 aa).

Asp-89 functions as the Nucleophile in the catalytic mechanism. Residues 160-377 enclose the TRUD domain; the sequence is YLPAFIGYQR…ILRGDPRKFT (218 aa).

Belongs to the pseudouridine synthase TruD family.

The catalysed reaction is uridine(13) in tRNA = pseudouridine(13) in tRNA. In terms of biological role, could be responsible for synthesis of pseudouridine from uracil-13 in transfer RNAs. The protein is Probable tRNA pseudouridine synthase D of Saccharolobus solfataricus (strain ATCC 35092 / DSM 1617 / JCM 11322 / P2) (Sulfolobus solfataricus).